We begin with the raw amino-acid sequence, 575 residues long: Mitochondrial 2-methylisocitrate lyase ICL2 (575 aa).

Cys-238 is a catalytic residue.

It belongs to the isocitrate lyase/PEP mutase superfamily. Isocitrate lyase family.

The protein localises to the mitochondrion matrix. The enzyme catalyses (2S,3R)-3-hydroxybutane-1,2,3-tricarboxylate = pyruvate + succinate. It participates in organic acid metabolism; propanoate degradation. In terms of biological role, catalyzes the formation of pyruvate and succinate from 2-methylisocitrate during the metabolism of endogenous propionyl-CoA. Does not act on isocitrate. This Saccharomyces cerevisiae (strain ATCC 204508 / S288c) (Baker's yeast) protein is Mitochondrial 2-methylisocitrate lyase ICL2 (ICL2).